A 334-amino-acid chain; its full sequence is MKRACSRSPSPRRRPSSPRRTPPRDGTPPQKADADDPTPGASNDASTETRPGSGGEPAACRSSGPAALLAALEAGPAGVTFSSSAPPDPPMDLTNGGVSPAATSAPLDWTTFRRVFLIDDAWRPLMEPELANPLTAHLLAEYNRRCQTEEVLPPREDVFSWTRYCTPDEVRVVIIGQDPYHHPGQAHGLAFSVRANVPPPPSLRNVLAAVKNCYPEARMSGHGCLEKWARDGVLLLNTTLTVKRGAAASHSRIGWDRFVGGVIRRLAARRPGLVFMLWGTHAQNAIRPDPRVHCVLKFSHPSPLSKVPFGTCQHFLVANRYLETRSISPIDWSV.

A compositionally biased stretch (basic residues) spans 1–17; that stretch reads MKRACSRSPSPRRRPSS. Disordered stretches follow at residues 1–63 and 79–104; these read MKRA…CRSS and VTFS…AATS. The span at 40-50 shows a compositional bias: polar residues; it reads GASNDASTETR. The Proton acceptor role is filled by Asp178.

This sequence belongs to the uracil-DNA glycosylase (UDG) superfamily. UNG family.

Its subcellular location is the host nucleus. The enzyme catalyses Hydrolyzes single-stranded DNA or mismatched double-stranded DNA and polynucleotides, releasing free uracil.. In terms of biological role, excises uracil residues from the DNA which can arise as a result of misincorporation of dUMP residues by DNA polymerase or deamination of cytosines. Therefore may reduce deleterious uracil incorporation into the viral genome, particularly in terminally differentiated cells which lack DNA repair enzymes. The polypeptide is Uracil-DNA glycosylase (Human herpesvirus 1 (strain 17) (HHV-1)).